Here is a 132-residue protein sequence, read N- to C-terminus: Fatty acid-binding protein 1 (132 aa).

A fatty acid contacts are provided by residues R106 and 128-130; that span reads RYY.

Belongs to the calycin superfamily. Fatty-acid binding protein (FABP) family. Monomer. As to expression, midgut.

It is found in the cytoplasm. Binds fatty acids in a 1:1 molar ratio. The sequence is that of Fatty acid-binding protein 1 (MFB1) from Manduca sexta (Tobacco hawkmoth).